The sequence spans 1088 residues: RNA-directed RNA polymerase (1088 aa).

A RdRp catalytic domain is found at 501–687; that stretch reads LSYGDVTRFL…AKRYIAGGKI (187 aa).

This sequence belongs to the reoviridae RNA-directed RNA polymerase family. As to quaternary structure, interacts with VP3 (Potential). Interacts with VP2; this interaction activates VP1. Interacts with NSP5; this interaction is probably necessary for the formation of functional virus factories. Interacts with NSP2; this interaction is weak. Requires Mg(2+) as cofactor.

The protein resides in the virion. The catalysed reaction is RNA(n) + a ribonucleoside 5'-triphosphate = RNA(n+1) + diphosphate. Functionally, RNA-directed RNA polymerase that is involved in both transcription and genome replication. Together with VP3 capping enzyme, forms an enzyme complex positioned near the channels situated at each of the five-fold vertices of the core. Following infection, the outermost layer of the virus is lost, leaving a double-layered particle (DLP) made up of the core and VP6 shell. VP1 then catalyzes the transcription of fully conservative plus-strand genomic RNAs that are extruded through the DLP's channels into the cytoplasm where they function as mRNAs for translation of viral proteins. One copy of each of the viral (+)RNAs is also recruited during core assembly, together with newly synthesized polymerase complexes and VP2. The polymerase of these novo-formed particles catalyzes the synthesis of complementary minus-strands leading to dsRNA formation. To do so, the polymerase specifically recognizes and binds 4 bases 5'-UGUG-3' in the conserved 3'-sequence of plus-strand RNA templates. VP2 presumably activates the autoinhibited VP1-RNA complex to coordinate packaging and genome replication. Once dsRNA synthesis is complete, the polymerase switches to the transcriptional mode, thus providing secondary transcription. The chain is RNA-directed RNA polymerase from Rotavirus A (isolate RVA/Human/United States/WI61/1983/G9P1A[8]) (RV-A).